We begin with the raw amino-acid sequence, 208 residues long: Protein JLP2 (208 aa).

Basic residues predominate over residues alanine 185–lysine 194. The interval alanine 185–valine 208 is disordered.

This sequence belongs to the CCDC25 family.

It is found in the cytoplasm. The polypeptide is Protein JLP2 (JLP2) (Saccharomyces cerevisiae (strain ATCC 204508 / S288c) (Baker's yeast)).